Reading from the N-terminus, the 458-residue chain is ATP synthase subunit beta (458 aa).

Residue Gly-148–Thr-155 participates in ATP binding.

The protein belongs to the ATPase alpha/beta chains family. In terms of assembly, F-type ATPases have 2 components, CF(1) - the catalytic core - and CF(0) - the membrane proton channel. CF(1) has five subunits: alpha(3), beta(3), gamma(1), delta(1), epsilon(1). CF(0) has three main subunits: a(1), b(2) and c(9-12). The alpha and beta chains form an alternating ring which encloses part of the gamma chain. CF(1) is attached to CF(0) by a central stalk formed by the gamma and epsilon chains, while a peripheral stalk is formed by the delta and b chains.

Its subcellular location is the cell inner membrane. The catalysed reaction is ATP + H2O + 4 H(+)(in) = ADP + phosphate + 5 H(+)(out). In terms of biological role, produces ATP from ADP in the presence of a proton gradient across the membrane. The catalytic sites are hosted primarily by the beta subunits. The chain is ATP synthase subunit beta from Shewanella pealeana (strain ATCC 700345 / ANG-SQ1).